The chain runs to 260 residues: Proteasome subunit alpha (260 aa).

The disordered stretch occupies residues 241–260 (VEAEEVPEKEEDYSELDSNY). Residues 242-260 (EAEEVPEKEEDYSELDSNY) are compositionally biased toward acidic residues.

Belongs to the peptidase T1A family. As to quaternary structure, the 20S proteasome core is composed of 14 alpha and 14 beta subunits that assemble into four stacked heptameric rings, resulting in a barrel-shaped structure. The two inner rings, each composed of seven catalytic beta subunits, are sandwiched by two outer rings, each composed of seven alpha subunits. The catalytic chamber with the active sites is on the inside of the barrel. Has a gated structure, the ends of the cylinder being occluded by the N-termini of the alpha-subunits. Is capped at one or both ends by the proteasome regulatory ATPase, PAN.

The protein resides in the cytoplasm. With respect to regulation, the formation of the proteasomal ATPase PAN-20S proteasome complex, via the docking of the C-termini of PAN into the intersubunit pockets in the alpha-rings, triggers opening of the gate for substrate entry. Interconversion between the open-gate and close-gate conformations leads to a dynamic regulation of the 20S proteasome proteolysis activity. Functionally, component of the proteasome core, a large protease complex with broad specificity involved in protein degradation. This is Proteasome subunit alpha from Thermococcus sibiricus (strain DSM 12597 / MM 739).